A 1203-amino-acid polypeptide reads, in one-letter code: Partitioning defective 3 homolog B (1203 aa).

2 disordered regions span residues 79–104 and 138–162; these read FDEQEPLQKTESPGGNPADRQSPDAF and RRSSDPAPGPHADAQPSTASLSGQS. Serine 100 is subject to Phosphoserine. Positions 152-162 are enriched in polar residues; the sequence is QPSTASLSGQS. The PDZ 1 domain maps to 201 to 289; that stretch reads TRAVEISGEG…SPSVILHVLL (89 aa). The tract at residues 334-374 is disordered; that stretch reads TRASSPEGEEPASPQQSKSPRVPRLGRKPSSPSLSPLMGFG. Residues serine 346, serine 352, and serine 368 each carry the phosphoserine modification. 2 consecutive PDZ domains span residues 383–468 and 496–585; these read KIDL…VIAR and TLEI…GMIQ. 7 positions are modified to phosphoserine: serine 635, serine 710, serine 728, serine 730, serine 746, serine 749, and serine 801. Residues 718–732 are compositionally biased toward basic and acidic residues; that stretch reads GKVQSLADRRSDSPG. The tract at residues 718-743 is disordered; that stretch reads GKVQSLADRRSDSPGKDFGPTLGLKK. 3 disordered regions span residues 787–927, 968–994, and 1050–1203; these read KSYD…EKQA, VFRSPSPLRAGPLAYPRDGRPLSPDHL, and RPSD…TAAV. Threonine 810 bears the Phosphothreonine mark. A compositionally biased stretch (basic and acidic residues) spans 827 to 842; that stretch reads VENKAKNIKKTKEKEK. Basic residues predominate over residues 843 to 854; it reads KKGKGKLKVKEK. Basic and acidic residues-rich tracts occupy residues 855 to 865, 881 to 893, 906 to 927, and 984 to 994; these read KLKEEHEDAER, KKDDKVGKAEQKG, ERMKEERERIGAKHQELREKQA, and RDGRPLSPDHL. Residues serine 1088 and serine 1182 each carry the phosphoserine modification.

The protein belongs to the PAR3 family. Interacts with PARD6B. Interacts with INSC/inscuteable.

It is found in the endomembrane system. Its subcellular location is the cell junction. It localises to the tight junction. In terms of biological role, putative adapter protein involved in asymmetrical cell division and cell polarization processes. May play a role in the formation of epithelial tight junctions. The polypeptide is Partitioning defective 3 homolog B (Pard3b) (Mus musculus (Mouse)).